Consider the following 443-residue polypeptide: NADH-ubiquinone oxidoreductase chain 4 (443 aa).

15 helical membrane passes run 1-21, 27-47, 71-91, 93-113, 114-134, 148-168, 187-207, 217-237, 247-267, 279-299, 308-328, 335-355, 362-382, 385-405, and 423-443; these read MFIS…PEAH, VWSF…WWNF, GVAL…MMLL, TVAG…ALCV, LDLL…FLLI, IVLY…MIYS, VLGW…PVHL, PTAG…IGFL, FCVS…LFST, IVAY…FSQS, FLMI…GILY, FILY…LFFL, AFPL…IFAV, LLAY…FWAF, and EFHT…KPMA.

The protein belongs to the complex I subunit 4 family.

The protein localises to the mitochondrion membrane. It catalyses the reaction a ubiquinone + NADH + 5 H(+)(in) = a ubiquinol + NAD(+) + 4 H(+)(out). Its function is as follows. Core subunit of the mitochondrial membrane respiratory chain NADH dehydrogenase (Complex I) that is believed to belong to the minimal assembly required for catalysis. Complex I functions in the transfer of electrons from NADH to the respiratory chain. The immediate electron acceptor for the enzyme is believed to be ubiquinone. The sequence is that of NADH-ubiquinone oxidoreductase chain 4 (ND4) from Chlamydomonas reinhardtii (Chlamydomonas smithii).